A 323-amino-acid polypeptide reads, in one-letter code: Methenyltetrahydromethanopterin cyclohydrolase (323 aa).

It belongs to the MCH family.

It localises to the cytoplasm. The enzyme catalyses 5,10-methenyl-5,6,7,8-tetrahydromethanopterin + H2O = N(5)-formyl-5,6,7,8-tetrahydromethanopterin + H(+). It functions in the pathway one-carbon metabolism; methanogenesis from CO(2); 5,10-methenyl-5,6,7,8-tetrahydromethanopterin from CO(2): step 3/3. Catalyzes the reversible interconversion of 5-formyl-H(4)MPT to methenyl-H(4)MPT(+). This chain is Methenyltetrahydromethanopterin cyclohydrolase, found in Methanococcus vannielii (strain ATCC 35089 / DSM 1224 / JCM 13029 / OCM 148 / SB).